We begin with the raw amino-acid sequence, 504 residues long: 2,3-bisphosphoglycerate-independent phosphoglycerate mutase (504 aa).

Mn(2+)-binding residues include aspartate 11 and serine 61. The active-site Phosphoserine intermediate is the serine 61. Substrate is bound by residues histidine 122, 152 to 153 (RD), arginine 183, arginine 189, 255 to 258 (RNDR), and lysine 329. Residues aspartate 396, histidine 400, aspartate 437, histidine 438, and histidine 455 each contribute to the Mn(2+) site.

Belongs to the BPG-independent phosphoglycerate mutase family. Monomer. It depends on Mn(2+) as a cofactor.

It catalyses the reaction (2R)-2-phosphoglycerate = (2R)-3-phosphoglycerate. It functions in the pathway carbohydrate degradation; glycolysis; pyruvate from D-glyceraldehyde 3-phosphate: step 3/5. Its function is as follows. Catalyzes the interconversion of 2-phosphoglycerate and 3-phosphoglycerate. This Bacteroides fragilis (strain YCH46) protein is 2,3-bisphosphoglycerate-independent phosphoglycerate mutase.